Reading from the N-terminus, the 350-residue chain is Calcium uniporter protein, mitochondrial (350 aa).

The transit peptide at 1–49 (MAAAAGRSLLLLLCSRGGGGGAGGCGALTAGCFPGLGVSRHRPHQQHRT) directs the protein to the mitochondrion. The Mitochondrial matrix segment spans residues 50-232 (AHQRPASWQS…ISRKAEKRTT (183 aa)). 2 positions are modified to phosphoserine; by CaMK2: serine 56 and serine 91. The segment at 74–164 (VTVVYQNGLP…LTYHVRPPKR (91 aa)) is N-terminal MCU domain. Cysteine 96 carries the post-translational modification S-glutathionyl cysteine. Residues 191 to 220 (IEQHQLNKERELVERLEDLKQQLAPLEKVR) adopt a coiled-coil conformation. The helical transmembrane segment at 233-256 (LVLWGGLAYMATQFGILARLTWWE) threads the bilayer. Residues 257–264 (YSWDIMEP) lie on the Mitochondrial intermembrane side of the membrane. A Selectivity filter motif is present at residues 259–267 (WDIMEPVTY). Glutamate 263 serves as a coordination point for Ca(2+). The helical transmembrane segment at 265-282 (VTYFITYGSAMAMYAYFV) threads the bilayer. At 283 to 350 (MTRQEYVYPE…LPLRQIGEKE (68 aa)) the chain is on the mitochondrial matrix side. Positions 284 to 289 (TRQEYV) are juxtamembrane helix. A coiled-coil region spans residues 310 to 338 (RFDLEKYNQLKDAIAQAEMDLKRLRDPLQ). At lysine 331 the chain carries N6-acetyllysine.

It belongs to the MCU (TC 1.A.77) family. In terms of assembly, homotetramer. Component of the uniplex complex, composed of MCU, EMRE/SMDT1, MICU1 and MICU2 (or MICU3) in a 4:4:1:1 stoichiometry. Interacts with CCDC109B/MCUB; this inhibits channel activity. Interacts with MCUR1. Interactions with MICU1 and MCUR1 are mutually exclusive. Interacts with SLC25A23. Post-translationally, phosphorylation by CaMK2 in heart leads to increased MCU current. The regulation of MCU by CaMK2 is however subject to discussion: another group was unable to reproduce these results. Phosphorylated on tyrosines by PTK2B/PYK2, promoting oligomerization. In terms of processing, glutathionylation at Cys-96 in response to reactive oxygen species (ROS) promotes MCU higher-order assembly, leading to constitutive activation of the MCU channel and mitochondrial calcium overload. Undergoes proteolytic degradation by SPG7. As to expression, detected in heart muscle (at protein level). Expressed in skeletal muscle, heart, kidney, liver, brain, lung, white fat and spleen.

It is found in the mitochondrion inner membrane. The catalysed reaction is Ca(2+)(in) = Ca(2+)(out). With respect to regulation, MCU channel activity is regulated by the heterodimer composed of MICU1 and either MICU2 or MICU3, which act as calcium-sensors. At low calcium levels, MICU1 occludes the pore of the MCU channel, preventing mitochondrial calcium uptake. At higher calcium levels, calcium-binding to MICU1 and MICU2 (or MICU3) induces a conformational change that weakens MCU-MICU1 interactions and moves the MICU1-MICU2 heterodimer away from the pore, allowing calcium permeation through the channel. MCU channel activity is gated by EMRE/SMDT1 via the juxtamembrane helix loop. Inhibited by ruthenium red or its derivative Ru360. Functionally, channel-forming and calcium-conducting subunit of the mitochondrial inner membrane calcium uniporter complex (uniplex), which mediates calcium uptake into the mitochondrial matrix. MCU channel activity is regulated by the calcium-sensor subunits of the uniplex MICU1 and MICU2 (or MICU3). Mitochondrial calcium homeostasis plays key roles in cellular physiology and regulates ATP production, cytoplasmic calcium signals and activation of cell death pathways. Involved in buffering the amplitude of systolic calcium rises in cardiomyocytes. While dispensable for baseline homeostatic cardiac function, acts as a key regulator of short-term mitochondrial calcium loading underlying a 'fight-or-flight' response during acute stress: acts by mediating a rapid increase of mitochondrial calcium in pacemaker cells. Participates in mitochondrial permeability transition during ischemia-reperfusion injury. Mitochondrial calcium uptake in skeletal muscle cells is involved in muscle size in adults. Regulates synaptic vesicle endocytosis kinetics in central nerve terminal. Regulates glucose-dependent insulin secretion in pancreatic beta-cells by regulating mitochondrial calcium uptake. Involved in antigen processing and presentation. This chain is Calcium uniporter protein, mitochondrial, found in Mus musculus (Mouse).